The following is a 337-amino-acid chain: Ketol-acid reductoisomerase (NADP(+)) (337 aa).

The region spanning 3-183 is the KARI N-terminal Rossmann domain; that stretch reads IELFYDADAD…GGGRAGIIPT (181 aa). NADP(+) is bound by residues 26–29, R49, S52, S54, and 84–87; these read YGSQ and DTSQ. H109 is an active-site residue. G135 contacts NADP(+). The region spanning 184–329 is the KARI C-terminal knotted domain; the sequence is TFEAETVTDL…AKLRDLMSWV (146 aa). Mg(2+) is bound by residues D192, E196, E228, and E232. Residue S253 coordinates substrate.

This sequence belongs to the ketol-acid reductoisomerase family. The cofactor is Mg(2+).

The catalysed reaction is (2R)-2,3-dihydroxy-3-methylbutanoate + NADP(+) = (2S)-2-acetolactate + NADPH + H(+). It carries out the reaction (2R,3R)-2,3-dihydroxy-3-methylpentanoate + NADP(+) = (S)-2-ethyl-2-hydroxy-3-oxobutanoate + NADPH + H(+). The protein operates within amino-acid biosynthesis; L-isoleucine biosynthesis; L-isoleucine from 2-oxobutanoate: step 2/4. Its pathway is amino-acid biosynthesis; L-valine biosynthesis; L-valine from pyruvate: step 2/4. Involved in the biosynthesis of branched-chain amino acids (BCAA). Catalyzes an alkyl-migration followed by a ketol-acid reduction of (S)-2-acetolactate (S2AL) to yield (R)-2,3-dihydroxy-isovalerate. In the isomerase reaction, S2AL is rearranged via a Mg-dependent methyl migration to produce 3-hydroxy-3-methyl-2-ketobutyrate (HMKB). In the reductase reaction, this 2-ketoacid undergoes a metal-dependent reduction by NADPH to yield (R)-2,3-dihydroxy-isovalerate. This Corynebacterium efficiens (strain DSM 44549 / YS-314 / AJ 12310 / JCM 11189 / NBRC 100395) protein is Ketol-acid reductoisomerase (NADP(+)).